The chain runs to 122 residues: Immunoglobulin lambda variable 4-3 (122 aa).

Residues 1 to 19 (MAWVSFYLLPFIFSTGLCA) form the signal peptide. A framework-1 region spans residues 20–44 (LPVLTQPPSASALLGASIKLTCTLS). The 102-residue stretch at 21–122 (PVLTQPPSAS…ESHTIDGQVG (102 aa)) folds into the Ig-like domain. A disulfide bridge links Cys-41 with Cys-111. A complementarity-determining-1 region spans residues 45-51 (SEHSTYT). The segment at 52–68 (IEWYQQRPGRSPQYIMK) is framework-2. Residues 69-75 (VKSDGSH) are complementarity-determining-2. Positions 76–111 (SKGDGIPDRFMGSSSGADRYLTFSNLQSDDEAEYHC) are framework-3. The complementarity-determining-3 stretch occupies residues 112 to 122 (GESHTIDGQVG).

Immunoglobulins are composed of two identical heavy chains and two identical light chains; disulfide-linked.

It is found in the secreted. Its subcellular location is the cell membrane. Functionally, v region of the variable domain of immunoglobulin light chains that participates in the antigen recognition. Immunoglobulins, also known as antibodies, are membrane-bound or secreted glycoproteins produced by B lymphocytes. In the recognition phase of humoral immunity, the membrane-bound immunoglobulins serve as receptors which, upon binding of a specific antigen, trigger the clonal expansion and differentiation of B lymphocytes into immunoglobulins-secreting plasma cells. Secreted immunoglobulins mediate the effector phase of humoral immunity, which results in the elimination of bound antigens. The antigen binding site is formed by the variable domain of one heavy chain, together with that of its associated light chain. Thus, each immunoglobulin has two antigen binding sites with remarkable affinity for a particular antigen. The variable domains are assembled by a process called V-(D)-J rearrangement and can then be subjected to somatic hypermutations which, after exposure to antigen and selection, allow affinity maturation for a particular antigen. This chain is Immunoglobulin lambda variable 4-3, found in Homo sapiens (Human).